The sequence spans 305 residues: Glycine--tRNA ligase alpha subunit (305 aa).

It belongs to the class-II aminoacyl-tRNA synthetase family. Tetramer of two alpha and two beta subunits.

It localises to the cytoplasm. It catalyses the reaction tRNA(Gly) + glycine + ATP = glycyl-tRNA(Gly) + AMP + diphosphate. In Vibrio campbellii (strain ATCC BAA-1116), this protein is Glycine--tRNA ligase alpha subunit.